A 197-amino-acid chain; its full sequence is Imidazoleglycerol-phosphate dehydratase (197 aa).

It belongs to the imidazoleglycerol-phosphate dehydratase family.

The protein resides in the cytoplasm. It carries out the reaction D-erythro-1-(imidazol-4-yl)glycerol 3-phosphate = 3-(imidazol-4-yl)-2-oxopropyl phosphate + H2O. It functions in the pathway amino-acid biosynthesis; L-histidine biosynthesis; L-histidine from 5-phospho-alpha-D-ribose 1-diphosphate: step 6/9. The polypeptide is Imidazoleglycerol-phosphate dehydratase (hisB) (Streptomyces coelicolor (strain ATCC BAA-471 / A3(2) / M145)).